The primary structure comprises 599 residues: MVLILGRRLNHENSGGVPESPAIKRKVFEMETKTLSDVFNFSSGSSHSESVLQVFNEFRDSRLFTDVIISVQGREFPCHRAVLSACSSYFRAMFCNDHRESREMVVEINGIQADAMDTFLQYVYTGRACITTLNVQFLFETSSLFQITTLRDACAKFLEEQLDPCNCLGIQRFADAHSLKQLASRCRTFALLNFPEVAQHEEFQDLRKDELEEYLASDELSICREEVVFEAVMRWVYHGVEYRRPMLKDLLQHVRLPLLHPNYFVQTVEGDKLIQNAPECYQLLHEARRYHVLGNEMMSPRTRPRRSTGFSEVIVVVGGCERMGGFNLPYTECYDPVTGEWTSLAKHPEYTKSEYAVCALRNDIILSGGRINSSYVWMYNSQLNVWIRVASLNKGRWRHKMTVLLGKVYAVGGYDGQCYLNNVEVYDSFSNRWTEVAPLKEAVCSPAVTSCAGKLFVIGGEPDENSCSNKVQCYDPESDSWQLKACLPFTKPNISAVSLNHLIYVCGGLTKSIYCYDPSQDHWMHVGHTFSRQESCGVSVCNGKIYILGGRGENGEASNNVVCYDPSSGIITSTAAMPRPVSYHGCVTVHRFSEKQHKP.

The BTB domain maps to 65–132 (TDVIISVQGR…VYTGRACITT (68 aa)). In terms of domain architecture, BACK spans 167–269 (CLGIQRFADA…HPNYFVQTVE (103 aa)). Kelch repeat units follow at residues 313-362 (VIVV…ALRN), 364-406 (IILS…VLLG), 407-453 (KVYA…SCAG), 455-501 (LFVI…SLNH), 503-543 (IYVC…VCNG), and 545-591 (IYIL…TVHR).

As to quaternary structure, forms homodimers. Component of the BCR(KLHL24) E3 ubiquitin ligase complex.

Its subcellular location is the perikaryon. It is found in the cell projection. It localises to the axon. The protein localises to the cytoplasm. The protein resides in the cell junction. Its subcellular location is the desmosome. It is found in the adherens junction. Functionally, necessary to maintain the balance between intermediate filament stability and degradation, a process that is essential for skin integrity. Reduces kainate receptor-mediated currents in brain neurons, most probably by modulating channel properties. It is required for proper heart development. This chain is Kelch-like protein 24a, found in Danio rerio (Zebrafish).